The chain runs to 414 residues: Tryptophan synthase beta chain (414 aa).

An N6-(pyridoxal phosphate)lysine modification is found at lysine 109.

The protein belongs to the TrpB family. As to quaternary structure, tetramer of two alpha and two beta chains. Requires pyridoxal 5'-phosphate as cofactor.

It carries out the reaction (1S,2R)-1-C-(indol-3-yl)glycerol 3-phosphate + L-serine = D-glyceraldehyde 3-phosphate + L-tryptophan + H2O. Its pathway is amino-acid biosynthesis; L-tryptophan biosynthesis; L-tryptophan from chorismate: step 5/5. In terms of biological role, the beta subunit is responsible for the synthesis of L-tryptophan from indole and L-serine. This chain is Tryptophan synthase beta chain, found in Prochlorococcus marinus (strain AS9601).